The following is a 298-amino-acid chain: 4-hydroxybenzoate octaprenyltransferase (298 aa).

The next 7 membrane-spanning stretches (helical) occupy residues Ile30–Ile50, Gly54–Asn74, Val105–Thr125, Phe148–Ile168, Asp218–Leu238, Leu240–Gln260, and Ala275–Trp295.

It belongs to the UbiA prenyltransferase family. Mg(2+) serves as cofactor.

Its subcellular location is the cell inner membrane. The enzyme catalyses all-trans-octaprenyl diphosphate + 4-hydroxybenzoate = 4-hydroxy-3-(all-trans-octaprenyl)benzoate + diphosphate. It functions in the pathway cofactor biosynthesis; ubiquinone biosynthesis. In terms of biological role, catalyzes the prenylation of para-hydroxybenzoate (PHB) with an all-trans polyprenyl group. Mediates the second step in the final reaction sequence of ubiquinone-8 (UQ-8) biosynthesis, which is the condensation of the polyisoprenoid side chain with PHB, generating the first membrane-bound Q intermediate 3-octaprenyl-4-hydroxybenzoate. In Chromohalobacter salexigens (strain ATCC BAA-138 / DSM 3043 / CIP 106854 / NCIMB 13768 / 1H11), this protein is 4-hydroxybenzoate octaprenyltransferase.